A 932-amino-acid polypeptide reads, in one-letter code: Lon protease homolog 2, peroxisomal (932 aa).

The 250-residue stretch at 11–260 (LSLVPLPKGS…RVVDILNKQN (250 aa)) folds into the Lon N-terminal domain. The segment at 298-328 (RRGIPGASGTPPPGLGGRNNEADEKESNELD) is disordered. Residues 317–328 (NEADEKESNELD) show a composition bias toward basic and acidic residues. 486–493 (GPPGTGKT) lines the ATP pocket. The Lon proteolytic domain occupies 729–916 (HGRPGVVTGL…WEAIRHIWPD (188 aa)). Catalysis depends on residues S822 and K865. Residues 930-932 (SRL) carry the Microbody targeting signal motif.

The protein belongs to the peptidase S16 family.

It localises to the peroxisome matrix. It carries out the reaction Hydrolysis of proteins in presence of ATP.. ATP-dependent serine protease that mediates the selective degradation of misfolded and unassembled polypeptides in the peroxisomal matrix. Necessary for type 2 peroxisome targeting signal (PTS2)-containing protein processing and facilitates peroxisome matrix protein import. The polypeptide is Lon protease homolog 2, peroxisomal (Emericella nidulans (strain FGSC A4 / ATCC 38163 / CBS 112.46 / NRRL 194 / M139) (Aspergillus nidulans)).